The following is a 200-amino-acid chain: uncharacterized protein (200 aa).

This is an uncharacterized protein from Ureaplasma parvum serovar 3 (strain ATCC 700970).